We begin with the raw amino-acid sequence, 190 residues long: Probable RNA-binding protein 18 (190 aa).

The 82-residue stretch at 25–106 (HRLWIGNLDP…KKLVVRWAHA (82 aa)) folds into the RRM domain. Residues 166–190 (VYSYFKPPDKKRTTPYSRTAWKSRR) form a disordered region.

The protein is Probable RNA-binding protein 18 (RBM18) of Bos taurus (Bovine).